A 331-amino-acid chain; its full sequence is Probable cyclic nucleotide synthase IK1_05630 (331 aa).

Belongs to the CD-NTase family. D12 subfamily.

Functionally, cyclic nucleotide synthase (second messenger synthase) of a CBASS antivirus system. CBASS (cyclic oligonucleotide-based antiphage signaling system) provides immunity against bacteriophage. The CD-NTase protein synthesizes cyclic nucleotides in response to infection; these serve as specific second messenger signals. The signals activate a diverse range of effectors, leading to bacterial cell death and thus abortive phage infection. A type I-B CBASS system. In terms of biological role, probably a cyclic nucleotide synthase that makes second messenger nucleotide which activates a CBASS antiviral defense system. Protects B.subtilis against phage infection. When IK1_05630 and IK1_05631 are introduced in B.subtilis BEST7003 there is 1000-fold protection against phage SBSphiC. Both genes are required for protection. Activation leads to bacterial cell lysis and death, which occurs before the phage has finished its replication cycle, thus protecting non-infected bacteria by aborting the phage infection and preventing its propagation. This Bacillus cereus (strain VD146) protein is Probable cyclic nucleotide synthase IK1_05630.